Reading from the N-terminus, the 115-residue chain is Cytochrome c (115 aa).

The heme c site is built by Cys26, Cys29, His30, and Met91.

The protein belongs to the cytochrome c family. In terms of processing, binds 1 heme c group covalently per subunit.

The protein localises to the mitochondrion intermembrane space. In terms of biological role, electron carrier protein. The oxidized form of the cytochrome c heme group can accept an electron from the heme group of the cytochrome c1 subunit of cytochrome reductase. Cytochrome c then transfers this electron to the cytochrome oxidase complex, the final protein carrier in the mitochondrial electron-transport chain. The sequence is that of Cytochrome c from Theileria parva (East coast fever infection agent).